Reading from the N-terminus, the 246-residue chain is NAD-dependent protein deacylase (246 aa).

Residues 1–245 (MKEFITKHRD…ELIREILDNP (245 aa)) enclose the Deacetylase sirtuin-type domain. An NAD(+)-binding site is contributed by 20-39 (GAGISAESGIPTFRGSEGLW). Tyr64 and Arg67 together coordinate substrate. 98–101 (QNVD) is an NAD(+) binding site. The active-site Proton acceptor is the His116. Zn(2+)-binding residues include Cys124, Cys127, Cys146, and Cys149. NAD(+) is bound by residues 186-188 (GTS), 212-214 (NPE), and Thr230.

The protein belongs to the sirtuin family. Class III subfamily. It depends on Zn(2+) as a cofactor.

It is found in the cytoplasm. The catalysed reaction is N(6)-acetyl-L-lysyl-[protein] + NAD(+) + H2O = 2''-O-acetyl-ADP-D-ribose + nicotinamide + L-lysyl-[protein]. It catalyses the reaction N(6)-succinyl-L-lysyl-[protein] + NAD(+) + H2O = 2''-O-succinyl-ADP-D-ribose + nicotinamide + L-lysyl-[protein]. NAD-dependent lysine deacetylase and desuccinylase that specifically removes acetyl and succinyl groups on target proteins. Modulates the activities of several proteins which are inactive in their acylated form. This chain is NAD-dependent protein deacylase, found in Leptospira interrogans serogroup Icterohaemorrhagiae serovar Lai (strain 56601).